The following is a 455-amino-acid chain: Kynurenine 3-monooxygenase (455 aa).

This sequence belongs to the aromatic-ring hydroxylase family. KMO subfamily. It depends on FAD as a cofactor.

It catalyses the reaction L-kynurenine + NADPH + O2 + H(+) = 3-hydroxy-L-kynurenine + NADP(+) + H2O. It participates in cofactor biosynthesis; NAD(+) biosynthesis; quinolinate from L-kynurenine: step 1/3. In terms of biological role, catalyzes the hydroxylation of L-kynurenine (L-Kyn) to form 3-hydroxy-L-kynurenine (L-3OHKyn). Required for synthesis of quinolinic acid. This Xanthomonas oryzae pv. oryzae (strain PXO99A) protein is Kynurenine 3-monooxygenase.